Consider the following 377-residue polypeptide: Nitric oxide reductase FlRd-NAD(+) reductase (377 aa).

The protein belongs to the FAD-dependent oxidoreductase family. FAD serves as cofactor.

Its subcellular location is the cytoplasm. The catalysed reaction is 2 reduced [nitric oxide reductase rubredoxin domain] + NAD(+) + H(+) = 2 oxidized [nitric oxide reductase rubredoxin domain] + NADH. Its pathway is nitrogen metabolism; nitric oxide reduction. Functionally, one of at least two accessory proteins for anaerobic nitric oxide (NO) reductase. Reduces the rubredoxin moiety of NO reductase. This is Nitric oxide reductase FlRd-NAD(+) reductase from Salmonella agona (strain SL483).